We begin with the raw amino-acid sequence, 1338 residues long: Aldehyde oxidase (1338 aa).

Residues 5–92 (SELLFYVNGR…GAAVTTVEGI (88 aa)) enclose the 2Fe-2S ferredoxin-type domain. [2Fe-2S] cluster-binding residues include C44, C49, C52, and C74. Q113 contacts Mo-molybdopterin. The [2Fe-2S] cluster site is built by C114, C117, C149, and C151. Position 151 (C151) interacts with Mo-molybdopterin. The 186-residue stretch at 236–421 (FGSERMMWFS…VSVNIPYSRK (186 aa)) folds into the FAD-binding PCMH-type domain. Residues 264 to 271 (VIMGNTSV), A345, S354, H358, D367, and L411 contribute to the FAD site. Mo-molybdopterin is bound by residues 806–807 (AF) and M1047. S1068 is modified (phosphoserine). Mo-molybdopterin-binding positions include 1088–1091 (GSVV), Q1203, and L1268. The active-site Proton acceptor; for azaheterocycle hydroxylase activity is E1270.

The protein belongs to the xanthine dehydrogenase family. In terms of assembly, homodimer. [2Fe-2S] cluster serves as cofactor. It depends on FAD as a cofactor. Mo-molybdopterin is required as a cofactor. Abundant in liver, expressed in adipose tissue and at lower levels in lung, skeletal muscle, pancreas. In contrast to mice, no significant gender difference in AOX1 expression level (at protein level).

It is found in the cytoplasm. The enzyme catalyses an aldehyde + O2 + H2O = a carboxylate + H2O2 + H(+). The catalysed reaction is retinal + O2 + H2O = retinoate + H2O2 + H(+). Is very potently inhibited by raloxifene. Also inhibited by estradiol, ethinyl estradiol, hydralazine, menadione, isovanillin and thioridazine. Not inhibited by allopurinol, a xanthine dehydrogenase potent inhibitor. Oxidase with broad substrate specificity, oxidizing aromatic azaheterocycles, such as N1-methylnicotinamide, N-methylphthalazinium and phthalazine, as well as aldehydes, such as benzaldehyde, retinal, pyridoxal, and vanillin. Plays a key role in the metabolism of xenobiotics and drugs containing aromatic azaheterocyclic substituents. Participates in the bioactivation of prodrugs such as famciclovir, catalyzing the oxidation step from 6-deoxypenciclovir to penciclovir, which is a potent antiviral agent. Is probably involved in the regulation of reactive oxygen species homeostasis. May be a prominent source of superoxide generation via the one-electron reduction of molecular oxygen. May also catalyze nitric oxide (NO) production via the reduction of nitrite to NO with NADH or aldehyde as electron donor. May play a role in adipogenesis. This chain is Aldehyde oxidase, found in Homo sapiens (Human).